The primary structure comprises 173 residues: Shikimate kinase 1 (173 aa).

14–19 contacts ATP; the sequence is GAGKST. Serine 18 is a Mg(2+) binding site. 3 residues coordinate substrate: aspartate 36, arginine 60, and glycine 82. Arginine 120 serves as a coordination point for ATP. Arginine 140 serves as a coordination point for substrate. Position 157 (glutamine 157) interacts with ATP.

It belongs to the shikimate kinase family. Monomer. Mg(2+) serves as cofactor.

It is found in the cytoplasm. The enzyme catalyses shikimate + ATP = 3-phosphoshikimate + ADP + H(+). It participates in metabolic intermediate biosynthesis; chorismate biosynthesis; chorismate from D-erythrose 4-phosphate and phosphoenolpyruvate: step 5/7. Its function is as follows. Catalyzes the specific phosphorylation of the 3-hydroxyl group of shikimic acid using ATP as a cosubstrate. This Salmonella typhimurium (strain LT2 / SGSC1412 / ATCC 700720) protein is Shikimate kinase 1.